Consider the following 450-residue polypeptide: NADP-specific glutamate dehydrogenase (450 aa).

Lysine 114 is a catalytic residue.

The protein belongs to the Glu/Leu/Phe/Val dehydrogenases family. Homohexamer.

The catalysed reaction is L-glutamate + NADP(+) + H2O = 2-oxoglutarate + NH4(+) + NADPH + H(+). The sequence is that of NADP-specific glutamate dehydrogenase (gdhA) from Botryotinia fuckeliana (Noble rot fungus).